The following is a 49-amino-acid chain: U-theraphotoxin-Lk2a (49 aa).

Intrachain disulfides connect cysteine 4–cysteine 17, cysteine 8–cysteine 41, cysteine 22–cysteine 24, and cysteine 35–cysteine 46.

Belongs to the neurotoxin 12 (Hwtx-2) family. 04 (lasiotoxin) subfamily. In terms of tissue distribution, expressed by the venom gland.

The protein localises to the secreted. Functionally, toxin that causes irreversible contractile paralysis into adult Aedes aegypti resulting in 100% mortality after 24 hours. This Lasiodora klugi (Bahia scarlet tarantula) protein is U-theraphotoxin-Lk2a.